A 440-amino-acid chain; its full sequence is MAVTVETLDKLERKMTLSLPVTLIQSEVDMRLRRMARTVKMDGFRPGKVPMAVVARRYGDAVQYEVLTNKVGEAFTVAANEANLRVAGRPRITETQGTAEGHVTFDAIFEVFPEVRIADLANVEIEKLSTEVTEASIDKTLQGLRKQRRSFAQRAHDAPAQDGDGVTVDFEGKIDGEPFANGKAENFRFVIGEGPMPKEFEDAVRGMKSGESKTFPLAFPTQYHGQEVAGKTADFLVTVKKIESAHLPEVGEALARSLGSADGSIEGLRADIRKTLEREIRSHLRARNRRAVMNALLANADLELPKASVQDEIARLKANAYADLKQRGVKDPERLEIPEDKVRPTAERNVRLRLIFSEMVRAHGLRAKPEQVRAYVEELAASYEKPAEMVRGYYGDRRRMLEIESSVSEDNVTEFVFARAKVVARTISVDELLNPKDPKD.

In terms of domain architecture, PPIase FKBP-type spans 163–248 (GDGVTVDFEG…VKKIESAHLP (86 aa)).

This sequence belongs to the FKBP-type PPIase family. Tig subfamily.

The protein localises to the cytoplasm. It catalyses the reaction [protein]-peptidylproline (omega=180) = [protein]-peptidylproline (omega=0). In terms of biological role, involved in protein export. Acts as a chaperone by maintaining the newly synthesized protein in an open conformation. Functions as a peptidyl-prolyl cis-trans isomerase. The chain is Trigger factor from Verminephrobacter eiseniae (strain EF01-2).